The primary structure comprises 128 residues: Large ribosomal subunit protein bL19 (128 aa).

The protein belongs to the bacterial ribosomal protein bL19 family.

Functionally, this protein is located at the 30S-50S ribosomal subunit interface and may play a role in the structure and function of the aminoacyl-tRNA binding site. This is Large ribosomal subunit protein bL19 from Verminephrobacter eiseniae (strain EF01-2).